The chain runs to 1493 residues: Mitogen-activated protein kinase kinase kinase 1 (1493 aa).

Residues 1–23 are compositionally biased toward low complexity; it reads MAAAAGDRASSSGFPGAAAASPE. 2 disordered regions span residues 1-178 and 194-300; these read MAAA…PEER and HEWL…EETS. An N-acetylalanine modification is found at A2. S21 carries the phosphoserine modification. The span at 24-35 shows a compositional bias: gly residues; sequence AGGGGGGGGALQ. The span at 36-46 shows a compositional bias: low complexity; it reads GSGAPAAGAAG. Residues 89–99 show a composition bias toward pro residues; the sequence is PPCPSTSPSPE. A compositionally biased stretch (low complexity) spans 140–156; it reads ARSPAGAEPPSAAAPSG. A Phosphoserine modification is found at S142. The span at 157 to 178 shows a compositional bias: basic and acidic residues; the sequence is REMENKETLKGLHKMEDRPEER. Over residues 235–256 the composition is skewed to low complexity; it reads SAAPAPKGRRSPSPGSSPSGRS. Residue S270 is modified to Phosphoserine. T280 carries the post-translational modification Phosphothreonine. Residues S287, S292, and S295 each carry the phosphoserine modification. The segment at 333-361 adopts an SWIM-type zinc-finger fold; that stretch reads YRVFIGPQNCSCGRGAFCIHLLFVMLRVF. The segment covering 411-428 has biased composition (low complexity); that stretch reads SNSHTLSSSSTSTSSSEN. A disordered region spans residues 411–431; the sequence is SNSHTLSSSSTSTSSSENSIK. An RING-type zinc finger spans residues 438 to 487; it reads CPICLLGMLDEESLTVCEDGCRNKLHHHCMSIWAEECRRNREPLICPLCR. Residues S502 and S526 each carry the phosphoserine modification. 2 disordered regions span residues 506–531 and 895–914; these read SPAS…RRNQ and EHTV…RLSA. Positions 512–527 are enriched in low complexity; the sequence is AVQQPSSPQQPVAGSQ. S915 carries the phosphoserine modification. Disordered stretches follow at residues 927–957 and 992–1066; these read SVGL…LNSS and PCKI…TLDL. Positions 998–1013 are enriched in polar residues; it reads ASPQTQRKFSLQFQRN. Phosphoserine occurs at positions 999 and 1024. The span at 1049 to 1063 shows a compositional bias: polar residues; that stretch reads GSTSKLGDATKSSMT. The 266-residue stretch at 1224–1489 folds into the Protein kinase domain; that stretch reads WLKGQQIGLG…SRELLKHPVF (266 aa). ATP-binding positions include 1230 to 1238 and K1253; that span reads IGLGAFSSC. D1350 serves as the catalytic Proton acceptor. A phosphothreonine; by autocatalysis mark is found at T1381 and T1393.

Belongs to the protein kinase superfamily. STE Ser/Thr protein kinase family. MAP kinase kinase kinase subfamily. In terms of assembly, binds both upstream activators and downstream substrates in multimolecular complexes through its N-terminus. Oligomerizes after binding MAP4K2 or TRAF2. Interacts with AXIN1. Interacts (via the kinase catalytic domain) with STK38. Interacts with GRIPAP1. Requires Mg(2+) as cofactor. Post-translationally, autophosphorylated. Highly expressed in the heart and spleen while a lower level expression is seen in the liver.

It catalyses the reaction L-seryl-[protein] + ATP = O-phospho-L-seryl-[protein] + ADP + H(+). The enzyme catalyses L-threonyl-[protein] + ATP = O-phospho-L-threonyl-[protein] + ADP + H(+). Activated by autophosphorylation on Thr-1381 and Thr-1393 following oligomerization. Component of a protein kinase signal transduction cascade. Activates the ERK and JNK kinase pathways by phosphorylation of MAP2K1 and MAP2K4. May phosphorylate the MAPK8/JNK1 kinase. Activates CHUK and IKBKB, the central protein kinases of the NF-kappa-B pathway. This chain is Mitogen-activated protein kinase kinase kinase 1 (Map3k1), found in Mus musculus (Mouse).